We begin with the raw amino-acid sequence, 124 residues long: Vitelline membrane protein Vm32E (124 aa).

The N-terminal stretch at 1–19 is a signal peptide; sequence MKTVAFLAVVVLFAAFACA. Residues 42–81 form the VM domain; the sequence is SVPAPPCPKNYLFSCQPNLVPAPCAQQAAPAAYGSAGAYT.

It belongs to the vitelline membrane family.

Its subcellular location is the secreted. Its function is as follows. Major early eggshell protein. The sequence is that of Vitelline membrane protein Vm32E from Drosophila pseudoobscura pseudoobscura (Fruit fly).